Reading from the N-terminus, the 607-residue chain is DNA mismatch repair protein MutL (607 aa).

Belongs to the DNA mismatch repair MutL/HexB family.

Its function is as follows. This protein is involved in the repair of mismatches in DNA. It is required for dam-dependent methyl-directed DNA mismatch repair. May act as a 'molecular matchmaker', a protein that promotes the formation of a stable complex between two or more DNA-binding proteins in an ATP-dependent manner without itself being part of a final effector complex. The sequence is that of DNA mismatch repair protein MutL from Anaeromyxobacter dehalogenans (strain 2CP-1 / ATCC BAA-258).